Here is a 424-residue protein sequence, read N- to C-terminus: Nicotinate phosphoribosyltransferase (424 aa).

Residue histidine 242 is modified to Phosphohistidine; by autocatalysis.

Belongs to the NAPRTase family. Transiently phosphorylated on a His residue during the reaction cycle. Phosphorylation strongly increases the affinity for substrates and increases the rate of nicotinate D-ribonucleotide production. Dephosphorylation regenerates the low-affinity form of the enzyme, leading to product release.

It catalyses the reaction nicotinate + 5-phospho-alpha-D-ribose 1-diphosphate + ATP + H2O = nicotinate beta-D-ribonucleotide + ADP + phosphate + diphosphate. Its pathway is cofactor biosynthesis; NAD(+) biosynthesis; nicotinate D-ribonucleotide from nicotinate: step 1/1. Functionally, catalyzes the synthesis of beta-nicotinate D-ribonucleotide from nicotinate and 5-phospho-D-ribose 1-phosphate at the expense of ATP. This chain is Nicotinate phosphoribosyltransferase, found in Bartonella bacilliformis (strain ATCC 35685 / KC583 / Herrer 020/F12,63).